A 398-amino-acid polypeptide reads, in one-letter code: Nicotinate phosphoribosyltransferase 2 (398 aa).

Position 224 is a phosphohistidine; by autocatalysis (His224).

It belongs to the NAPRTase family. In terms of processing, transiently phosphorylated on a His residue during the reaction cycle. Phosphorylation strongly increases the affinity for substrates and increases the rate of nicotinate D-ribonucleotide production. Dephosphorylation regenerates the low-affinity form of the enzyme, leading to product release.

The enzyme catalyses nicotinate + 5-phospho-alpha-D-ribose 1-diphosphate + ATP + H2O = nicotinate beta-D-ribonucleotide + ADP + phosphate + diphosphate. It functions in the pathway cofactor biosynthesis; NAD(+) biosynthesis; nicotinate D-ribonucleotide from nicotinate: step 1/1. Its function is as follows. Catalyzes the synthesis of beta-nicotinate D-ribonucleotide from nicotinate and 5-phospho-D-ribose 1-phosphate at the expense of ATP. The sequence is that of Nicotinate phosphoribosyltransferase 2 from Pseudomonas aeruginosa (strain ATCC 15692 / DSM 22644 / CIP 104116 / JCM 14847 / LMG 12228 / 1C / PRS 101 / PAO1).